The sequence spans 213 residues: Orotate phosphoribosyltransferase (213 aa).

Lysine 26 contributes to the 5-phospho-alpha-D-ribose 1-diphosphate binding site. 34-35 (FF) is a binding site for orotate. 5-phospho-alpha-D-ribose 1-diphosphate-binding positions include 72–73 (YK), arginine 99, lysine 100, lysine 103, histidine 105, and 124–132 (DDVITAGTA). Positions 128 and 156 each coordinate orotate.

Belongs to the purine/pyrimidine phosphoribosyltransferase family. PyrE subfamily. Homodimer. Mg(2+) is required as a cofactor.

The catalysed reaction is orotidine 5'-phosphate + diphosphate = orotate + 5-phospho-alpha-D-ribose 1-diphosphate. The protein operates within pyrimidine metabolism; UMP biosynthesis via de novo pathway; UMP from orotate: step 1/2. In terms of biological role, catalyzes the transfer of a ribosyl phosphate group from 5-phosphoribose 1-diphosphate to orotate, leading to the formation of orotidine monophosphate (OMP). The chain is Orotate phosphoribosyltransferase from Photobacterium profundum (strain SS9).